The following is a 103-amino-acid chain: Putative membrane protein insertion efficiency factor (103 aa).

A disordered region spans residues 68-103 (HEGGYDPVPLAKQDAKPENNSESESLLNQPTETKSL). Over residues 87–103 (NSESESLLNQPTETKSL) the composition is skewed to polar residues.

It belongs to the UPF0161 family.

It localises to the cell inner membrane. In terms of biological role, could be involved in insertion of integral membrane proteins into the membrane. The polypeptide is Putative membrane protein insertion efficiency factor (Idiomarina loihiensis (strain ATCC BAA-735 / DSM 15497 / L2-TR)).